Consider the following 575-residue polypeptide: Acyloxyacyl hydrolase (575 aa).

Positions 1–23 (MQSPWKILTVAPLFLLLSLQSSA) are cleaved as a signal peptide. The propeptide occupies 24–34 (SPANDDQSRPS). Residues 37–118 (NGHTCVGCVL…HTLEFCKQNT (82 aa)) enclose the Saposin B-type domain. An important for enzyme activity, localization to cytoplasmic vesicles, and protein stability region spans residues 38–70 (GHTCVGCVLVVSVIEQLAQVHNSTVQASMERLC). Disulfide bonds link Cys-41-Cys-114, Cys-44-Cys-108, Cys-70-Cys-83, Cys-123-Cys-453, Cys-160-Cys-169, Cys-206-Cys-230, Cys-249-Cys-329, and Cys-376-Cys-459. N-linked (GlcNAc...) asparagine glycosylation occurs at Asn-59. A lipopolysaccharide binding region spans residues 173–177 (KLAME). Ca(2+) contacts are provided by Asp-184, Asp-186, Asp-188, Tyr-190, Asp-205, Asn-207, Asp-208, Asp-210, Val-213, Asp-223, Asp-227, Asn-229, Asn-231, Ile-233, and Glu-245. Asn-207 is a glycosylation site (N-linked (GlcNAc...) asparagine). Residue Ser-263 is part of the active site. N-linked (GlcNAc...) asparagine glycosylation is found at Asn-409 and Asn-466.

As to quaternary structure, heterodimer of the large and small subunits; disulfide-linked. It depends on Ca(2+) as a cofactor. In terms of processing, cleaved into a large and a small subunit. Post-translationally, the small subunit is N-glycosylated.

It is found in the secreted. Its subcellular location is the cytoplasmic vesicle. The catalysed reaction is a 3-(acyloxy)acyl derivative of bacterial toxin + H2O = a 3-hydroxyacyl derivative of bacterial toxin + a fatty acid + H(+). Inhibited by EDTA. In terms of biological role, removes the secondary (acyloxyacyl-linked) fatty acyl chains from the lipid A region of bacterial lipopolysaccharides. By breaking down LPS, terminates the host response to bacterial infection and prevents prolonged and damaging inflammatory responses. In peritoneal macrophages, seems to be important for recovery from a state of immune tolerance following infection by Gram-negative bacteria. This is Acyloxyacyl hydrolase from Homo sapiens (Human).